Reading from the N-terminus, the 310-residue chain is Aspartate carbamoyltransferase catalytic subunit (310 aa).

Residues Arg54 and Thr55 each contribute to the carbamoyl phosphate site. Lys84 lines the L-aspartate pocket. Residues Arg105, His134, and Gln137 each contribute to the carbamoyl phosphate site. Residues Arg167 and Arg229 each contribute to the L-aspartate site. 2 residues coordinate carbamoyl phosphate: Leu267 and Pro268.

This sequence belongs to the aspartate/ornithine carbamoyltransferase superfamily. ATCase family. Heterododecamer (2C3:3R2) of six catalytic PyrB chains organized as two trimers (C3), and six regulatory PyrI chains organized as three dimers (R2).

It catalyses the reaction carbamoyl phosphate + L-aspartate = N-carbamoyl-L-aspartate + phosphate + H(+). It functions in the pathway pyrimidine metabolism; UMP biosynthesis via de novo pathway; (S)-dihydroorotate from bicarbonate: step 2/3. In terms of biological role, catalyzes the condensation of carbamoyl phosphate and aspartate to form carbamoyl aspartate and inorganic phosphate, the committed step in the de novo pyrimidine nucleotide biosynthesis pathway. This is Aspartate carbamoyltransferase catalytic subunit from Enterobacter sp. (strain 638).